The primary structure comprises 647 residues: UvrABC system protein C (647 aa).

The region spanning 26–106 (SEPGCYLMRD…IKEHQPYFNI (81 aa)) is the GIY-YIG domain. The 36-residue stretch at 216–251 (DQLKDLLHKQMLIQSKLQEFEKAAIIRDQIKGIEQL) folds into the UVR domain.

The protein belongs to the UvrC family. As to quaternary structure, interacts with UvrB in an incision complex.

It localises to the cytoplasm. Its function is as follows. The UvrABC repair system catalyzes the recognition and processing of DNA lesions. UvrC both incises the 5' and 3' sides of the lesion. The N-terminal half is responsible for the 3' incision and the C-terminal half is responsible for the 5' incision. The chain is UvrABC system protein C from Prochlorococcus marinus (strain MIT 9211).